The sequence spans 1024 residues: Protein translocase subunit SecA (1024 aa).

ATP contacts are provided by residues Gln143, 161–165 (GEGKT), and Asp661. The segment at 970 to 1024 (HEEAGSVYNAQPDGEPESQASKQQPVVADHSKPGRNDLCPCGSGKKYKNCHGREA) is disordered. Zn(2+)-binding residues include Cys1008, Cys1010, Cys1019, and His1020. Over residues 1014-1024 (KKYKNCHGREA) the composition is skewed to basic residues.

Belongs to the SecA family. As to quaternary structure, monomer and homodimer. Part of the essential Sec protein translocation apparatus which comprises SecA, SecYEG and auxiliary proteins SecDF. Other proteins may also be involved. Requires Zn(2+) as cofactor.

It localises to the cell inner membrane. The protein resides in the cytoplasm. The catalysed reaction is ATP + H2O + cellular proteinSide 1 = ADP + phosphate + cellular proteinSide 2.. Part of the Sec protein translocase complex. Interacts with the SecYEG preprotein conducting channel. Has a central role in coupling the hydrolysis of ATP to the transfer of proteins into and across the cell membrane, serving as an ATP-driven molecular motor driving the stepwise translocation of polypeptide chains across the membrane. This Chlorobium luteolum (strain DSM 273 / BCRC 81028 / 2530) (Pelodictyon luteolum) protein is Protein translocase subunit SecA.